The following is a 281-amino-acid chain: Diaminopimelate epimerase (281 aa).

2 residues coordinate substrate: asparagine 13 and asparagine 66. Residue cysteine 75 is the Proton donor of the active site. Residues 76–77 (GN), asparagine 164, asparagine 197, and 215–216 (ER) each bind substrate. The active-site Proton acceptor is the cysteine 224. 225-226 (GT) contributes to the substrate binding site.

It belongs to the diaminopimelate epimerase family. In terms of assembly, homodimer.

The protein localises to the cytoplasm. The enzyme catalyses (2S,6S)-2,6-diaminopimelate = meso-2,6-diaminopimelate. It participates in amino-acid biosynthesis; L-lysine biosynthesis via DAP pathway; DL-2,6-diaminopimelate from LL-2,6-diaminopimelate: step 1/1. Its function is as follows. Catalyzes the stereoinversion of LL-2,6-diaminopimelate (L,L-DAP) to meso-diaminopimelate (meso-DAP), a precursor of L-lysine and an essential component of the bacterial peptidoglycan. The sequence is that of Diaminopimelate epimerase from Gloeothece citriformis (strain PCC 7424) (Cyanothece sp. (strain PCC 7424)).